Reading from the N-terminus, the 305-residue chain is UDP-3-O-acyl-N-acetylglucosamine deacetylase (305 aa).

Residues H79, H238, and D242 each contribute to the Zn(2+) site. The active-site Proton donor is H265.

The protein belongs to the LpxC family. It depends on Zn(2+) as a cofactor.

It catalyses the reaction a UDP-3-O-[(3R)-3-hydroxyacyl]-N-acetyl-alpha-D-glucosamine + H2O = a UDP-3-O-[(3R)-3-hydroxyacyl]-alpha-D-glucosamine + acetate. Its pathway is glycolipid biosynthesis; lipid IV(A) biosynthesis; lipid IV(A) from (3R)-3-hydroxytetradecanoyl-[acyl-carrier-protein] and UDP-N-acetyl-alpha-D-glucosamine: step 2/6. Catalyzes the hydrolysis of UDP-3-O-myristoyl-N-acetylglucosamine to form UDP-3-O-myristoylglucosamine and acetate, the committed step in lipid A biosynthesis. The sequence is that of UDP-3-O-acyl-N-acetylglucosamine deacetylase from Shigella boydii serotype 18 (strain CDC 3083-94 / BS512).